Reading from the N-terminus, the 215-residue chain is Glycerol-3-phosphate acyltransferase (215 aa).

Transmembrane regions (helical) follow at residues 14 to 34, 63 to 83, 92 to 112, 128 to 148, and 154 to 174; these read SSSA…AVVV, TAAA…LWLA, WGAY…PLFL, MAIE…VAVF, and LAAL…SGAA.

This sequence belongs to the PlsY family. Probably interacts with PlsX.

Its subcellular location is the cell inner membrane. It carries out the reaction an acyl phosphate + sn-glycerol 3-phosphate = a 1-acyl-sn-glycero-3-phosphate + phosphate. It participates in lipid metabolism; phospholipid metabolism. In terms of biological role, catalyzes the transfer of an acyl group from acyl-phosphate (acyl-PO(4)) to glycerol-3-phosphate (G3P) to form lysophosphatidic acid (LPA). This enzyme utilizes acyl-phosphate as fatty acyl donor, but not acyl-CoA or acyl-ACP. This chain is Glycerol-3-phosphate acyltransferase, found in Bordetella bronchiseptica (strain ATCC BAA-588 / NCTC 13252 / RB50) (Alcaligenes bronchisepticus).